A 104-amino-acid polypeptide reads, in one-letter code: Nucleoid-associated protein GAU_1113 (104 aa).

The protein belongs to the YbaB/EbfC family. Homodimer.

The protein localises to the cytoplasm. It is found in the nucleoid. In terms of biological role, binds to DNA and alters its conformation. May be involved in regulation of gene expression, nucleoid organization and DNA protection. This is Nucleoid-associated protein GAU_1113 from Gemmatimonas aurantiaca (strain DSM 14586 / JCM 11422 / NBRC 100505 / T-27).